A 224-amino-acid chain; its full sequence is Holliday junction branch migration complex subunit RuvA (224 aa).

Positions 1 to 64 are domain I; the sequence is MIGKVAGILD…EDLLQLFGFP (64 aa). A domain II region spans residues 65-143; it reads TMIEKEWHRL…ALMAMGGGTA (79 aa). The disordered stretch occupies residues 141–185; the sequence is GTAALAPSEPPEPEPGTSSGSRRKTRAPEPPRPSHTADALSALAN. Residues 144-170 are flexible linker; it reads ALAPSEPPEPEPGTSSGSRRKTRAPEP. The segment at 171–224 is domain III; the sequence is PRPSHTADALSALANLGYQPTDAAQAVAQAAGESPDADTAALIRAALKLLAPKS.

It belongs to the RuvA family. In terms of assembly, homotetramer. Forms an RuvA(8)-RuvB(12)-Holliday junction (HJ) complex. HJ DNA is sandwiched between 2 RuvA tetramers; dsDNA enters through RuvA and exits via RuvB. An RuvB hexamer assembles on each DNA strand where it exits the tetramer. Each RuvB hexamer is contacted by two RuvA subunits (via domain III) on 2 adjacent RuvB subunits; this complex drives branch migration. In the full resolvosome a probable DNA-RuvA(4)-RuvB(12)-RuvC(2) complex forms which resolves the HJ.

The protein resides in the cytoplasm. Its function is as follows. The RuvA-RuvB-RuvC complex processes Holliday junction (HJ) DNA during genetic recombination and DNA repair, while the RuvA-RuvB complex plays an important role in the rescue of blocked DNA replication forks via replication fork reversal (RFR). RuvA specifically binds to HJ cruciform DNA, conferring on it an open structure. The RuvB hexamer acts as an ATP-dependent pump, pulling dsDNA into and through the RuvAB complex. HJ branch migration allows RuvC to scan DNA until it finds its consensus sequence, where it cleaves and resolves the cruciform DNA. This is Holliday junction branch migration complex subunit RuvA from Cereibacter sphaeroides (strain ATCC 17029 / ATH 2.4.9) (Rhodobacter sphaeroides).